Here is a 362-residue protein sequence, read N- to C-terminus: UDP-arabinopyranose mutase 3 (362 aa).

The DXD motif signature appears at 106–108 (DDD). An N-linked (Glc...) arginine glycan is attached at Arg-154.

It belongs to the RGP family. In terms of assembly, heterodimer with RGP1. It depends on Mn(2+) as a cofactor. The cofactor is Mg(2+). Post-translationally, reversibly glycosylated in vitro by UDP-glucose, UDP-xylose and UDP-galactose, but not UDP-mannose. Specifically expressed in developing seeds.

The protein resides in the cytoplasm. It is found in the cytosol. Its subcellular location is the golgi apparatus. The catalysed reaction is UDP-beta-L-arabinofuranose = UDP-beta-L-arabinopyranose. UDP-L-arabinose mutase involved in the biosynthesis of cell wall non-cellulosic polysaccharides. Catalyzes the interconvertion of UDP-L-arabinopyranose (UDP-Arap) and UDP-L-arabinofuranose (UDP-Araf). Preferentially catalyzes the formation of UDP-Arap from UDP-Araf. At thermodynamic equilibrium in vitro the ratio of the pyranose form over the furanose form is 95:5. Is not active on other UDP-sugars (UDP-Gal, UDP-Xyl, UDP-Glc, GDP-Man and GDP-Fuc). Is probably active as heteromer in vivo. The chain is UDP-arabinopyranose mutase 3 from Arabidopsis thaliana (Mouse-ear cress).